The chain runs to 507 residues: Histidine ammonia-lyase (507 aa).

Positions 142–144 form a cross-link, 5-imidazolinone (Ala-Gly); sequence ASG. At Ser143 the chain carries 2,3-didehydroalanine (Ser).

It belongs to the PAL/histidase family. In terms of processing, contains an active site 4-methylidene-imidazol-5-one (MIO), which is formed autocatalytically by cyclization and dehydration of residues Ala-Ser-Gly.

The protein resides in the cytoplasm. It catalyses the reaction L-histidine = trans-urocanate + NH4(+). Its pathway is amino-acid degradation; L-histidine degradation into L-glutamate; N-formimidoyl-L-glutamate from L-histidine: step 1/3. The chain is Histidine ammonia-lyase from Maricaulis maris (strain MCS10) (Caulobacter maris).